The primary structure comprises 880 residues: Nonsense-mediated mRNA decay factor SMG7-like (880 aa).

2 TPR repeats span residues 149–183 and 184–217; these read QEQY…NPHN and QLAV…GASN. The interval 669–711 is disordered; that stretch reads RLGLSKPNGLGPIDETGPVSAFDSLSINSSTEHPASSYSPPTP. A compositionally biased stretch (polar residues) spans 691–701; it reads DSLSINSSTEH.

May play a role in growth and development. This is Nonsense-mediated mRNA decay factor SMG7-like from Arabidopsis thaliana (Mouse-ear cress).